Consider the following 768-residue polypeptide: Protein ITPRID2 (768 aa).

Disordered stretches follow at residues 1 to 24 (MTTE…AEDS), 39 to 78 (LQAM…ESEE), and 98 to 124 (RKSG…CSPG). Composition is skewed to polar residues over residues 39 to 57 (LQAM…TVTS) and 102 to 122 (SQDF…STCS). A phosphoserine mark is found at serine 153, serine 177, serine 246, serine 248, serine 255, serine 268, serine 276, and serine 312. Residues 315 to 338 (SVKKEEAPQSEAPRVEECHHGRTP) form a disordered region. The span at 316 to 334 (VKKEEAPQSEAPRVEECHH) shows a compositional bias: basic and acidic residues. Residue lysine 317 forms a Glycyl lysine isopeptide (Lys-Gly) (interchain with G-Cter in SUMO2) linkage. Phosphoserine is present on residues serine 378 and serine 411. Residues 468–546 (QELQVMRRSL…GLEEQLRAVR (79 aa)) are a coiled coil. Serine 549, serine 564, serine 569, serine 572, serine 627, and serine 643 each carry phosphoserine. Disordered regions lie at residues 605-647 (IPPG…VGKP) and 663-718 (ALTP…AAEE). Residues 610–627 (SSESVFSQATSESSSVCS) show a composition bias toward polar residues. Threonine 665 carries the phosphothreonine modification. Over residues 667-677 (TAPSRTGSVQT) the composition is skewed to polar residues. The residue at position 670 (serine 670) is a Phosphoserine. A Phosphothreonine modification is found at threonine 677. Residues 682–694 (ESSEEVDAAEEAP) are compositionally biased toward acidic residues.

Its subcellular location is the cytoplasm. The protein is Protein ITPRID2 of Pongo abelii (Sumatran orangutan).